Reading from the N-terminus, the 202-residue chain is Putative 3-methyladenine DNA glycosylase (202 aa).

This sequence belongs to the DNA glycosylase MPG family.

This chain is Putative 3-methyladenine DNA glycosylase, found in Rhodopseudomonas palustris (strain BisB5).